An 894-amino-acid polypeptide reads, in one-letter code: Kinesin-like protein KIN-UB (894 aa).

The interval 1–53 (MAMASSRNGAVRGSMRPVSGANSSNLRSSSFKSRIPSSAPAPRRSSSASIGAA) is disordered. Residues 19–50 (SGANSSNLRSSSFKSRIPSSAPAPRRSSSASI) show a composition bias toward low complexity. The Kinesin motor domain occupies 60-402 (RVRVAVRLRP…ILFGQRAMKV (343 aa)). 145–152 (GQTGTGKT) is an ATP binding site. The D-BOX signature appears at 372–380 (RTSLIVTIG). Residues 423-588 (VQLDKVIAEN…RSQLVQLTFE (166 aa)) adopt a coiled-coil conformation. Disordered stretches follow at residues 530–550 (EEEV…GEGE) and 598–623 (RGAP…ESVN). Residues 603 to 623 (NSYSGTDSLPSRHSQARESVN) are compositionally biased toward polar residues. ARM repeat units lie at residues 626 to 665 (KAPF…NLAA), 667 to 707 (EANQ…NLAM), 709 to 749 (EVSQ…NLCG), and 751 to 790 (DKLQ…NFAK).

The protein belongs to the TRAFAC class myosin-kinesin ATPase superfamily. Kinesin family. Ungrouped subfamily. Interacts (via C-terminus) with NEK5. As to expression, expressed in the basal regions and petioles of immature leaves and in the root elongation zone.

It is found in the cytoplasm. The protein localises to the cytoskeleton. Functionally, involved in the control of epidermal-cell morphogenesis in roots and helical growth of roots by promoting microtubule depolymerization and limiting the accumulation of endoplasmic microtubules. Seems to be involved in the control of cell-file rotation (or twisting). This Arabidopsis thaliana (Mouse-ear cress) protein is Kinesin-like protein KIN-UB.